Reading from the N-terminus, the 262-residue chain is MIFVLDVGNTNAVLGVFEEGELRQHWRMETDRHKTEDEYGMLVKQLLEHEGLSFEDVKGIIVSSVVPPIMFALERMCEKYFKIKPLVVGPGIKTGLNIKYENPREVGADRIVNAVAGIHLYGSPLIIVDFGTATTYCYINEEKHYMGGVITPGIMISAEALYSRAAKLPRIEITKPSSVVGKNTVSAMQSGILYGYVGQVEGIVKRMKEEARQEPKVIATGGLAKLISEESNVIDIVDPFLTLKGLYMLYERNANLQHEKGE.

6–13 (DVGNTNAV) lines the ATP pocket. Substrate is bound by residues tyrosine 100 and 107–110 (GADR). Aspartate 109 acts as the Proton acceptor in catalysis. Aspartate 129 lines the K(+) pocket. Residue threonine 132 participates in ATP binding. Position 184 (threonine 184) interacts with substrate.

It belongs to the type III pantothenate kinase family. Homodimer. NH4(+) serves as cofactor. The cofactor is K(+).

Its subcellular location is the cytoplasm. It carries out the reaction (R)-pantothenate + ATP = (R)-4'-phosphopantothenate + ADP + H(+). It participates in cofactor biosynthesis; coenzyme A biosynthesis; CoA from (R)-pantothenate: step 1/5. Its function is as follows. Catalyzes the phosphorylation of pantothenate (Pan), the first step in CoA biosynthesis. The sequence is that of Type III pantothenate kinase from Bacillus cereus (strain B4264).